Consider the following 247-residue polypeptide: Leucyl/phenylalanyl-tRNA--protein transferase (247 aa).

Belongs to the L/F-transferase family.

It is found in the cytoplasm. The enzyme catalyses N-terminal L-lysyl-[protein] + L-leucyl-tRNA(Leu) = N-terminal L-leucyl-L-lysyl-[protein] + tRNA(Leu) + H(+). It catalyses the reaction N-terminal L-arginyl-[protein] + L-leucyl-tRNA(Leu) = N-terminal L-leucyl-L-arginyl-[protein] + tRNA(Leu) + H(+). It carries out the reaction L-phenylalanyl-tRNA(Phe) + an N-terminal L-alpha-aminoacyl-[protein] = an N-terminal L-phenylalanyl-L-alpha-aminoacyl-[protein] + tRNA(Phe). In terms of biological role, functions in the N-end rule pathway of protein degradation where it conjugates Leu, Phe and, less efficiently, Met from aminoacyl-tRNAs to the N-termini of proteins containing an N-terminal arginine or lysine. The polypeptide is Leucyl/phenylalanyl-tRNA--protein transferase (Solidesulfovibrio magneticus (strain ATCC 700980 / DSM 13731 / RS-1) (Desulfovibrio magneticus)).